The chain runs to 278 residues: Neuronal membrane glycoprotein M6-a (278 aa).

The residue at position 1 (Met-1) is an N-acetylmethionine. Topologically, residues 1–22 are cytoplasmic; that stretch reads MEENMEEGQTQKGCFECCIKCL. Residues 23 to 43 form a helical membrane-spanning segment; the sequence is GGIPYASLIATILLYAGVALF. Over 44-84 the chain is Extracellular; the sequence is CGCGHEALSGTVNILQTYFEMARTAGDTLDVFTMIDIFKYV. A helical transmembrane segment spans residues 85-105; the sequence is IYGIAAAFFVYGILLMVEGFF. Residues 106–127 lie on the Cytoplasmic side of the membrane; sequence TTGAIKDLYGDFKITTCGRCVS. Residues 128 to 148 form a helical membrane-spanning segment; that stretch reads AWFIMLTYLFMLAWLGVTAFT. Over 149–213 the chain is Extracellular; it reads SLPVYMYFNL…STELNMTFHL (65 aa). Asn-164 is a glycosylation site (N-linked (GlcNAc...) asparagine). A disulfide bond links Cys-174 and Cys-192. Asn-208 is a glycosylation site (N-linked (GlcNAc...) asparagine). Residues 214–234 traverse the membrane as a helical segment; that stretch reads FIVALAGAGAAVIAMVHYLMV. Topologically, residues 235–278 are cytoplasmic; the sequence is LSANWAYVKDACRMQKYEDIKSKEEQELHDIHSTRSKERLNAYT. The residue at position 256 (Ser-256) is a Phosphoserine. At Thr-278 the chain carries Phosphothreonine.

It belongs to the myelin proteolipid protein family. In terms of assembly, interacts with OPRM1. Interacts with palmitoyltransferase ZDHHC17/HIP14; the interaction leads to palmitoylation of GPM6A. Post-translationally, N-glycosylated. Palmitoylated by ZDHHC17/HIP14.

The protein localises to the cell membrane. It is found in the cell projection. It localises to the axon. Its subcellular location is the growth cone. The protein resides in the dendritic spine. The protein localises to the filopodium. It is found in the neuron projection. Involved in neuronal differentiation, including differentiation and migration of neuronal stem cells. Plays a role in neuronal plasticity and is involved in neurite and filopodia outgrowth, filopodia motility and probably synapse formation. GPM6A-induced filopodia formation involves mitogen-activated protein kinase (MAPK) and Src signaling pathways. May be involved in neuronal NGF-dependent Ca(2+) influx. May be involved in regulation of endocytosis and intracellular trafficking of G-protein-coupled receptors (GPCRs); may enhance internalization and recycling of mu-type opioid receptor. The chain is Neuronal membrane glycoprotein M6-a (GPM6A) from Bos taurus (Bovine).